We begin with the raw amino-acid sequence, 181 residues long: Caltractin ICL1d (181 aa).

Positions 1–29 are disordered; sequence MARRGQQPPPQQAPPAQKNQTGKFNPAEF. 4 consecutive EF-hand domains span residues 37 to 72, 73 to 108, 110 to 145, and 146 to 181; these read EEVL…LGFE, AKNQ…RISE, DSKA…LGET, and MDDS…KTFA. Residues Asp50, Asp52, Thr54, Ser56, Glu61, Asp86, Asp88, Ser90, Gln92, and Glu97 each coordinate Ca(2+).

The protein belongs to the centrin family. In terms of assembly, monomer.

It is found in the cytoplasm. The protein resides in the cytoskeleton. Functionally, plays a fundamental role in microtubule organizing center structure and function. Component of the infraciliary lattice (ICL) and the ciliary basal bodies. In Paramecium tetraurelia, this protein is Caltractin ICL1d (Icl1d).